The primary structure comprises 189 residues: GTP cyclohydrolase 1 (189 aa).

Cys78, His81, and Cys150 together coordinate Zn(2+).

This sequence belongs to the GTP cyclohydrolase I family. In terms of assembly, homomer.

It catalyses the reaction GTP + H2O = 7,8-dihydroneopterin 3'-triphosphate + formate + H(+). Its pathway is cofactor biosynthesis; 7,8-dihydroneopterin triphosphate biosynthesis; 7,8-dihydroneopterin triphosphate from GTP: step 1/1. The sequence is that of GTP cyclohydrolase 1 from Bacillus anthracis (strain A0248).